A 757-amino-acid polypeptide reads, in one-letter code: NAD(P)H-quinone oxidoreductase subunit 5, chloroplastic (757 aa).

The next 17 helical transmembrane spans lie at 9 to 29 (WIIP…LLLV), 40 to 60 (WAFP…DLSV), 89 to 109 (IDPL…MVLI), 122 to 139 (LRFF…LGLV), 147 to 167 (IYIF…FWFT), 185 to 205 (GDFG…SFEF), 219 to 239 (NGVN…GAVA), 258 to 278 (TPIS…FLVA), 280 to 300 (LLPL…IGVI), 327 to 347 (LGYI…FHLI), 354 to 374 (ALLF…VGYS), 396 to 416 (MTFL…CFWS), 425 to 445 (WLYS…TAFY), 544 to 564 (LLPL…GIPF), 607 to 627 (SIAY…YLFF), 692 to 712 (GIMN…KYLG), and 718 to 738 (SYLF…IFFF).

Belongs to the complex I subunit 5 family. In terms of assembly, NDH is composed of at least 16 different subunits, 5 of which are encoded in the nucleus.

The protein localises to the plastid. It localises to the chloroplast thylakoid membrane. The catalysed reaction is a plastoquinone + NADH + (n+1) H(+)(in) = a plastoquinol + NAD(+) + n H(+)(out). It carries out the reaction a plastoquinone + NADPH + (n+1) H(+)(in) = a plastoquinol + NADP(+) + n H(+)(out). NDH shuttles electrons from NAD(P)H:plastoquinone, via FMN and iron-sulfur (Fe-S) centers, to quinones in the photosynthetic chain and possibly in a chloroplast respiratory chain. The immediate electron acceptor for the enzyme in this species is believed to be plastoquinone. Couples the redox reaction to proton translocation, and thus conserves the redox energy in a proton gradient. This chain is NAD(P)H-quinone oxidoreductase subunit 5, chloroplastic (ndhF), found in Drimys granadensis.